Reading from the N-terminus, the 236-residue chain is tRNA (guanine-N(1)-)-methyltransferase (236 aa).

Residues Gly-114 and 134-139 each bind S-adenosyl-L-methionine; that span reads IGDYIL.

It belongs to the RNA methyltransferase TrmD family. As to quaternary structure, homodimer.

It localises to the cytoplasm. It catalyses the reaction guanosine(37) in tRNA + S-adenosyl-L-methionine = N(1)-methylguanosine(37) in tRNA + S-adenosyl-L-homocysteine + H(+). Its function is as follows. Specifically methylates guanosine-37 in various tRNAs. This is tRNA (guanine-N(1)-)-methyltransferase from Wolbachia pipientis wMel.